The following is a 164-amino-acid chain: Phosphopantetheine adenylyltransferase (164 aa).

Residue serine 9 coordinates substrate. ATP is bound by residues 9–10 (SF) and histidine 17. Positions 41, 78, and 92 each coordinate substrate. ATP-binding positions include 93-95 (GLR), glutamate 103, and 128-134 (SRPITAT).

This sequence belongs to the bacterial CoaD family. As to quaternary structure, homohexamer. Requires Mg(2+) as cofactor.

The protein localises to the cytoplasm. It carries out the reaction (R)-4'-phosphopantetheine + ATP + H(+) = 3'-dephospho-CoA + diphosphate. It functions in the pathway cofactor biosynthesis; coenzyme A biosynthesis; CoA from (R)-pantothenate: step 4/5. Reversibly transfers an adenylyl group from ATP to 4'-phosphopantetheine, yielding dephospho-CoA (dPCoA) and pyrophosphate. In Allorhizobium ampelinum (strain ATCC BAA-846 / DSM 112012 / S4) (Agrobacterium vitis (strain S4)), this protein is Phosphopantetheine adenylyltransferase.